Consider the following 355-residue polypeptide: WAT1-related protein At3g28130 (355 aa).

The next 10 membrane-spanning stretches (helical) occupy residues Ala-11–Phe-31, Tyr-42–Phe-62, Ile-80–Tyr-100, Thr-104–Phe-124, Ser-136–Tyr-156, Trp-186–Leu-206, Phe-218–Val-238, Pro-244–Phe-264, Leu-290–Gly-310, and Ser-311–Lys-331. The region spanning Thr-29–Val-154 is the EamA domain.

The protein belongs to the drug/metabolite transporter (DMT) superfamily. Plant drug/metabolite exporter (P-DME) (TC 2.A.7.4) family.

Its subcellular location is the membrane. This chain is WAT1-related protein At3g28130, found in Arabidopsis thaliana (Mouse-ear cress).